We begin with the raw amino-acid sequence, 392 residues long: Ribosomal RNA large subunit methyltransferase G (392 aa).

This sequence belongs to the methyltransferase superfamily. RlmG family.

It is found in the cytoplasm. It carries out the reaction guanosine(1835) in 23S rRNA + S-adenosyl-L-methionine = N(2)-methylguanosine(1835) in 23S rRNA + S-adenosyl-L-homocysteine + H(+). Its function is as follows. Specifically methylates the guanine in position 1835 (m2G1835) of 23S rRNA. The protein is Ribosomal RNA large subunit methyltransferase G of Shewanella frigidimarina (strain NCIMB 400).